The sequence spans 152 residues: Lipoprotein signal peptidase (152 aa).

3 helical membrane passes run 5 to 25 (LFVL…FWIV), 61 to 81 (WFFV…LATH), and 84 to 104 (LNIW…GNFI). Residues Asp-114 and Asp-130 contribute to the active site. A helical transmembrane segment spans residues 125–145 (IFNVADSYLTVGVILLVICLW).

The protein belongs to the peptidase A8 family.

Its subcellular location is the cell membrane. It catalyses the reaction Release of signal peptides from bacterial membrane prolipoproteins. Hydrolyzes -Xaa-Yaa-Zaa-|-(S,diacylglyceryl)Cys-, in which Xaa is hydrophobic (preferably Leu), and Yaa (Ala or Ser) and Zaa (Gly or Ala) have small, neutral side chains.. It participates in protein modification; lipoprotein biosynthesis (signal peptide cleavage). Its function is as follows. This protein specifically catalyzes the removal of signal peptides from prolipoproteins. This Streptococcus pyogenes serotype M18 (strain MGAS8232) protein is Lipoprotein signal peptidase.